Reading from the N-terminus, the 405-residue chain is Arginine biosynthesis bifunctional protein ArgJ (405 aa).

Residues Thr-152, Lys-178, Thr-189, Glu-276, Asn-400, and Thr-405 each contribute to the substrate site. Thr-189 serves as the catalytic Nucleophile.

Belongs to the ArgJ family. As to quaternary structure, heterotetramer of two alpha and two beta chains.

Its subcellular location is the cytoplasm. It catalyses the reaction N(2)-acetyl-L-ornithine + L-glutamate = N-acetyl-L-glutamate + L-ornithine. It carries out the reaction L-glutamate + acetyl-CoA = N-acetyl-L-glutamate + CoA + H(+). The protein operates within amino-acid biosynthesis; L-arginine biosynthesis; L-ornithine and N-acetyl-L-glutamate from L-glutamate and N(2)-acetyl-L-ornithine (cyclic): step 1/1. It participates in amino-acid biosynthesis; L-arginine biosynthesis; N(2)-acetyl-L-ornithine from L-glutamate: step 1/4. Functionally, catalyzes two activities which are involved in the cyclic version of arginine biosynthesis: the synthesis of N-acetylglutamate from glutamate and acetyl-CoA as the acetyl donor, and of ornithine by transacetylation between N(2)-acetylornithine and glutamate. The protein is Arginine biosynthesis bifunctional protein ArgJ of Pseudomonas putida (strain ATCC 47054 / DSM 6125 / CFBP 8728 / NCIMB 11950 / KT2440).